A 753-amino-acid chain; its full sequence is 5-methyltetrahydropteroyltriglutamate--homocysteine methyltransferase (753 aa).

5-methyltetrahydropteroyltri-L-glutamate-binding positions include 17-20 (RELK) and lysine 117. L-homocysteine-binding positions include 431–433 (IGS) and glutamate 484. Residues 431–433 (IGS) and glutamate 484 each bind L-methionine. Residues 515–516 (RC) and tryptophan 561 contribute to the 5-methyltetrahydropteroyltri-L-glutamate site. Aspartate 599 is an L-homocysteine binding site. Aspartate 599 provides a ligand contact to L-methionine. Position 605 (glutamate 605) interacts with 5-methyltetrahydropteroyltri-L-glutamate. Zn(2+) contacts are provided by histidine 641, cysteine 643, and glutamate 665. The Proton donor role is filled by histidine 694. A Zn(2+)-binding site is contributed by cysteine 726.

Belongs to the vitamin-B12 independent methionine synthase family. Zn(2+) is required as a cofactor.

It catalyses the reaction 5-methyltetrahydropteroyltri-L-glutamate + L-homocysteine = tetrahydropteroyltri-L-glutamate + L-methionine. The protein operates within amino-acid biosynthesis; L-methionine biosynthesis via de novo pathway; L-methionine from L-homocysteine (MetE route): step 1/1. Catalyzes the transfer of a methyl group from 5-methyltetrahydrofolate to homocysteine resulting in methionine formation. This is 5-methyltetrahydropteroyltriglutamate--homocysteine methyltransferase from Escherichia coli O7:K1 (strain IAI39 / ExPEC).